The primary structure comprises 195 residues: Probable septum site-determining protein MinC (195 aa).

The protein belongs to the MinC family. In terms of assembly, interacts with MinD and FtsZ.

Cell division inhibitor that blocks the formation of polar Z ring septums. Rapidly oscillates between the poles of the cell to destabilize FtsZ filaments that have formed before they mature into polar Z rings. Prevents FtsZ polymerization. This chain is Probable septum site-determining protein MinC, found in Helicobacter pylori (strain P12).